The following is a 592-amino-acid chain: UPF0329 protein ECU01_0110/ECU01_1500/ECU08_0040 (592 aa).

Basic and acidic residues-rich tracts occupy residues 306 to 339 (RQRR…SKEK) and 353 to 362 (EAKEEEKKES). Residues 306–404 (RQRRREREIE…RKRYKIHRRV (99 aa)) form a disordered region.

Belongs to the UPF0329 family.

This chain is UPF0329 protein ECU01_0110/ECU01_1500/ECU08_0040, found in Encephalitozoon cuniculi (strain GB-M1) (Microsporidian parasite).